Consider the following 323-residue polypeptide: tRNA U34 carboxymethyltransferase (323 aa).

Residues Lys-91, Trp-105, Lys-110, Gly-130, 152–154 (DPS), 181–182 (IE), Met-196, Tyr-200, and Arg-315 each bind carboxy-S-adenosyl-L-methionine.

The protein belongs to the class I-like SAM-binding methyltransferase superfamily. CmoB family. In terms of assembly, homotetramer.

It carries out the reaction carboxy-S-adenosyl-L-methionine + 5-hydroxyuridine(34) in tRNA = 5-carboxymethoxyuridine(34) in tRNA + S-adenosyl-L-homocysteine + H(+). Functionally, catalyzes carboxymethyl transfer from carboxy-S-adenosyl-L-methionine (Cx-SAM) to 5-hydroxyuridine (ho5U) to form 5-carboxymethoxyuridine (cmo5U) at position 34 in tRNAs. The sequence is that of tRNA U34 carboxymethyltransferase from Vibrio cholerae serotype O1 (strain ATCC 39541 / Classical Ogawa 395 / O395).